Reading from the N-terminus, the 88-residue chain is MKAVLVQMLKGYKRWISPLLPVSCRYVPTCSEYAMEAISIHGAVRGSVLALGRLLRCHPFVRGGYDPVPRSHSCCDDKISTTAHDAVR.

Belongs to the UPF0161 family.

Its subcellular location is the cell inner membrane. In terms of biological role, could be involved in insertion of integral membrane proteins into the membrane. This is Putative membrane protein insertion efficiency factor from Koribacter versatilis (strain Ellin345).